Consider the following 342-residue polypeptide: Isopentenyl-diphosphate delta-isomerase (342 aa).

Residue arginine 11–lysine 12 participates in substrate binding. FMN is bound by residues serine 68, serine 69 to threonine 71, serine 99, and asparagine 127. Serine 99 to arginine 101 lines the substrate pocket. Position 162 (glutamine 162) interacts with substrate. Glutamate 163 serves as a coordination point for Mg(2+). FMN is bound by residues lysine 194, threonine 224, glycine 274–lysine 276, and alanine 295–glycine 296.

Belongs to the IPP isomerase type 2 family. In terms of assembly, homooctamer. Dimer of tetramers. The cofactor is FMN. It depends on NADPH as a cofactor. Mg(2+) serves as cofactor.

The protein resides in the cytoplasm. The catalysed reaction is isopentenyl diphosphate = dimethylallyl diphosphate. In terms of biological role, involved in the biosynthesis of isoprenoids. Catalyzes the 1,3-allylic rearrangement of the homoallylic substrate isopentenyl (IPP) to its allylic isomer, dimethylallyl diphosphate (DMAPP). This Rickettsia rickettsii (strain Iowa) protein is Isopentenyl-diphosphate delta-isomerase.